The chain runs to 84 residues: Cytochrome b559 subunit alpha (84 aa).

The helical transmembrane segment at 22 to 36 (VIHSITIPSLFVAGW) threads the bilayer. His-24 is a heme binding site.

It belongs to the PsbE/PsbF family. In terms of assembly, heterodimer of an alpha subunit and a beta subunit. PSII is composed of 1 copy each of membrane proteins PsbA, PsbB, PsbC, PsbD, PsbE, PsbF, PsbH, PsbI, PsbJ, PsbK, PsbL, PsbM, PsbT, PsbX, PsbY, PsbZ, Psb30/Ycf12, at least 3 peripheral proteins of the oxygen-evolving complex and a large number of cofactors. It forms dimeric complexes. Heme b serves as cofactor.

Its subcellular location is the plastid. It localises to the chloroplast thylakoid membrane. This b-type cytochrome is tightly associated with the reaction center of photosystem II (PSII). PSII is a light-driven water:plastoquinone oxidoreductase that uses light energy to abstract electrons from H(2)O, generating O(2) and a proton gradient subsequently used for ATP formation. It consists of a core antenna complex that captures photons, and an electron transfer chain that converts photonic excitation into a charge separation. The sequence is that of Cytochrome b559 subunit alpha from Gracilaria tenuistipitata var. liui (Red alga).